A 167-amino-acid polypeptide reads, in one-letter code: NADH-quinone oxidoreductase subunit I 1 (167 aa).

2 4Fe-4S ferredoxin-type domains span residues 52–82 (LQRD…IEAA) and 98–127 (KVYN…HGHG). 8 residues coordinate [4Fe-4S] cluster: Cys-62, Cys-65, Cys-68, Cys-72, Cys-107, Cys-110, Cys-113, and Cys-117. Residues 148–167 (PVPPGAKPPSMADEVPAGAH) are disordered.

Belongs to the complex I 23 kDa subunit family. NDH-1 is composed of 14 different subunits. Subunits NuoA, H, J, K, L, M, N constitute the membrane sector of the complex. [4Fe-4S] cluster serves as cofactor.

The protein localises to the cell inner membrane. The catalysed reaction is a quinone + NADH + 5 H(+)(in) = a quinol + NAD(+) + 4 H(+)(out). NDH-1 shuttles electrons from NADH, via FMN and iron-sulfur (Fe-S) centers, to quinones in the respiratory chain. The immediate electron acceptor for the enzyme in this species is believed to be ubiquinone. Couples the redox reaction to proton translocation (for every two electrons transferred, four hydrogen ions are translocated across the cytoplasmic membrane), and thus conserves the redox energy in a proton gradient. This chain is NADH-quinone oxidoreductase subunit I 1, found in Solibacter usitatus (strain Ellin6076).